A 447-amino-acid polypeptide reads, in one-letter code: Sporulation protein YpeB (447 aa).

This sequence belongs to the YpeB family.

Its function is as follows. Required for spore cortex hydrolysis during germination. Appears to be required for either expression, localization, activation or function of SleB. This chain is Sporulation protein YpeB, found in Halalkalibacterium halodurans (strain ATCC BAA-125 / DSM 18197 / FERM 7344 / JCM 9153 / C-125) (Bacillus halodurans).